The sequence spans 181 residues: Acireductone dioxygenase (181 aa).

Positions 97, 99, 103, and 141 each coordinate Fe(2+). Positions 97, 99, 103, and 141 each coordinate Ni(2+).

Belongs to the acireductone dioxygenase (ARD) family. In terms of assembly, monomer. It depends on Fe(2+) as a cofactor. Ni(2+) serves as cofactor.

The catalysed reaction is 1,2-dihydroxy-5-(methylsulfanyl)pent-1-en-3-one + O2 = 3-(methylsulfanyl)propanoate + CO + formate + 2 H(+). It carries out the reaction 1,2-dihydroxy-5-(methylsulfanyl)pent-1-en-3-one + O2 = 4-methylsulfanyl-2-oxobutanoate + formate + 2 H(+). Its pathway is amino-acid biosynthesis; L-methionine biosynthesis via salvage pathway; L-methionine from S-methyl-5-thio-alpha-D-ribose 1-phosphate: step 5/6. Catalyzes 2 different reactions between oxygen and the acireductone 1,2-dihydroxy-3-keto-5-methylthiopentene (DHK-MTPene) depending upon the metal bound in the active site. Fe-containing acireductone dioxygenase (Fe-ARD) produces formate and 2-keto-4-methylthiobutyrate (KMTB), the alpha-ketoacid precursor of methionine in the methionine recycle pathway. Ni-containing acireductone dioxygenase (Ni-ARD) produces methylthiopropionate, carbon monoxide and formate, and does not lie on the methionine recycle pathway. The polypeptide is Acireductone dioxygenase (Pseudomonas fluorescens (strain Pf0-1)).